A 690-amino-acid chain; its full sequence is Tripartite terminase subunit 3 (690 aa).

The Walker A motif motif lies at 226 to 233 (IPRRHGKT). Residues 321 to 326 (LLFVDE) carry the Walker B motif motif. E326 serves as the catalytic For ATPase activity. Active-site for nuclease activity residues include D481, E555, and D667.

Belongs to the herpesviridae TRM3 protein family. In terms of assembly, interacts with the terminase subunits TRM1 and TRM2. Interacts with portal protein.

It localises to the host nucleus. In terms of biological role, component of the molecular motor that translocates viral genomic DNA in empty capsid during DNA packaging. Forms a tripartite terminase complex together with TRM1 and TRM2 in the host cytoplasm. Once the complex reaches the host nucleus, it interacts with the capsid portal vertex. This portal forms a ring in which genomic DNA is translocated into the capsid. TRM3 carries an RNase H-like nuclease activity that plays an important role for the cleavage of concatemeric viral DNA into unit length genomes. The protein is Tripartite terminase subunit 3 of Homo sapiens (Human).